A 632-amino-acid polypeptide reads, in one-letter code: MQDDLLMDKSKAQQRQQPQQPPSSQTQQQQKEAASVAEPPSSRESSPPTHKDKMQMESPLLPGLSFQQEPPTTPSLSPSFGSTWSTGGSNSAVDDSFFPGITPVNGTMLFQNFPHHHHVNPVFGGTFSPQMGLAHQTQQQQRRSPASPNNHTAYTQRNAYSHQPILTNKPSSSPNSSSPSPSNWNNQQNAAWNTPSNPWGAMQPGRDPRRAVGVGVGVGVGVPSPLNPISPLKKTFSSNVIAPPKFSRASPLTPKSWVEDNAFRTDNGNTLLPLQDRNRPYDSFNLHTLENSLMDMIRTDHEPLKARMGLNFHHPGTDNIMALNTRSYGRRRGRSSLFPFEDGFLGDGHGDQSLSSGLSSPTHCQNGERIERYSRKVFVGGLPPDIDEDEITASFRRFGPLVVDWPHKAESKSYFPPKGYAFLLFQEESSVQALIDACLEEDGKLYLCVSSPTIKDKPVQIRPWNLSDSDFVMDGSQPLDPRKTIFVGGVPRPLRAVELAMIMDRLYGGVCYAGIDTDPELKYPKGAGRVAFSNQQSYIAAISARFVQLQHNDIDKRVEVKPYVLDDQMCDECQGTRCGGKFAPFFCANVTCLQYYCEYCWASIHSRAGREFHKPLVKEGGDRPRHVPFHWS.

Positions 1 to 11 (MQDDLLMDKSK) are enriched in basic and acidic residues. Disordered regions lie at residues 1-89 (MQDD…TGGS) and 127-212 (FSPQ…RRAV). Low complexity predominate over residues 13-48 (QQRQQPQQPPSSQTQQQQKEAASVAEPPSSRESSPP). 2 stretches are compositionally biased toward polar residues: residues 65-89 (SFQQEPPTTPSLSPSFGSTWSTGGS) and 135-169 (HQTQQQQRRSPASPNNHTAYTQRNAYSHQPILTNK). The span at 170 to 193 (PSSSPNSSSPSPSNWNNQQNAAWN) shows a compositional bias: low complexity. RRM domains are found at residues 375–466 (RKVF…PWNL) and 483–565 (KTIF…PYVL).

It belongs to the RRM CPEB family. Following synaptic activity, forms amyloid-like oligomers. Aggregation requires an intact actin cytoskeleton. In embryos, expressed in the central nervous system, and intermediate and distal pronephric tubule segments of the embryonic kidney.

Its subcellular location is the cytoplasm. The protein localises to the nucleus. The protein resides in the synapse. It localises to the cell projection. It is found in the dendrite. Its subcellular location is the postsynaptic density. Its function is as follows. Sequence-specific RNA-binding protein which acts as a translational repressor in the basal unstimulated state but, following neuronal stimulation, acts as a translational activator. Does not bind to the cytoplasmic polyadenylation element (CPE), a uridine-rich sequence element within the mRNA 3'-UTR, but binds to a U-rich loop within a stem-loop structure. Required for the consolidation and maintenance of hippocampal-based long term memory. Inhibits differentiation of intermediate mesoderm from an early stage to inhibit pronephric differentiation but induce neural differentiation. The chain is Cytoplasmic polyadenylation element-binding protein 3 (cpeb3) from Xenopus tropicalis (Western clawed frog).